Here is a 1544-residue protein sequence, read N- to C-terminus: Lysine-specific demethylase 5B (1544 aa).

The region spanning 32–73 (CPVFEPSWEEFADPFAFIHKIRPIAEQTGICKVRPPPDWQPP) is the JmjN domain. In terms of domain architecture, ARID spans 97–187 (TRVKLNFLDQ…ILNPYNLFLS (91 aa)). Residues lysine 148, lysine 204, lysine 209, lysine 242, lysine 274, and lysine 278 each participate in a glycyl lysine isopeptide (Lys-Gly) (interchain with G-Cter in SUMO2) cross-link. The segment at 201–230 (TDTKDKEYKPHDIPQRQSVQPSETCPPARR) is disordered. Positions 202-214 (DTKDKEYKPHDIP) are enriched in basic and acidic residues. The segment at 309–359 (LYVCLLCGSGNDEDRLLLCDGCDDSYHTFCLIPPLHDVPKGDWRCPKCLAQ) adopts a PHD-type 1 zinc-finger fold. Position 425 (tyrosine 425) interacts with 2-oxoglutarate. The 167-residue stretch at 453–619 (EYLDSGWNLN…LGRQCVEHYR (167 aa)) folds into the JmjC domain. 2 residues coordinate Fe cation: histidine 499 and glutamate 501. Positions 507, 509, and 517 each coordinate 2-oxoglutarate. Position 587 (histidine 587) interacts with Fe cation. The C5HC2 zinc-finger motif lies at 692–744 (CVKCKTTCFMSAISCSCKPGLLVCLHHVKELCSCPPYKYKLRYRYTLDDLYPM). A Glycyl lysine isopeptide (Lys-Gly) (interchain with G-Cter in SUMO2) cross-link involves residue lysine 769. Lysine 832 is subject to N6-acetyllysine. Phosphoserine is present on serine 986. The PHD-type 2 zinc-finger motif lies at 1176-1224 (IKICLCQKAPAAPMIQCELCRDAFHTSCVAVPSISQGLRIWLCPHCRRS). Residue serine 1328 is modified to Phosphoserine. Positions 1374–1400 (PSPAQQTDRSSPVRPSSEKNDCCRGKR) are disordered. A compositionally biased stretch (polar residues) spans 1376-1387 (PAQQTDRSSPVR). Positions 1389–1400 (SSEKNDCCRGKR) are enriched in basic and acidic residues. Lysine 1450 participates in a covalent cross-link: Glycyl lysine isopeptide (Lys-Gly) (interchain with G-Cter in SUMO2). Residue serine 1456 is modified to Phosphoserine. Residues 1484 to 1538 (DAICPAVSCLQPEGDEVDWVQCDGSCNQWFHQVCVGVSPEMAEKEDYICVRCTVK) form a PHD-type 3 zinc finger.

This sequence belongs to the JARID1 histone demethylase family. Interacts with FOXG1B, PAX9, MYC, MYCN and RB1. Interacts with HDAC1, HDAC4, HDAC5 and HDAC7. Interacts (via PHD-type 1 zinc finger) with histone H3 unmodified at 'Lys-4'; the interaction is inhibited when histone H3 is methylated at 'Arg-2' or 'Lys-4'. The cofactor is Fe(2+). Ubiquitously expressed, with highest levels in testis. Down-regulated in melanoma and glioblastoma. Up-regulated in breast cancer (at protein level).

It is found in the nucleus. The enzyme catalyses N(6),N(6),N(6)-trimethyl-L-lysyl(4)-[histone H3] + 3 2-oxoglutarate + 3 O2 = L-lysyl(4)-[histone H3] + 3 formaldehyde + 3 succinate + 3 CO2. Several specific inhibitors are being developed and tested. The inhibitor KDOAM-25 inhibits its demethylase activity, resulting to cell cycle arrest in myeloma cells. Functionally, histone demethylase that demethylates 'Lys-4' of histone H3, thereby playing a central role in histone code. Does not demethylate histone H3 'Lys-9' or H3 'Lys-27'. Demethylates trimethylated, dimethylated and monomethylated H3 'Lys-4'. Acts as a transcriptional corepressor for FOXG1B and PAX9. Favors the proliferation of breast cancer cells by repressing tumor suppressor genes such as BRCA1 and HOXA5. In contrast, may act as a tumor suppressor for melanoma. Represses the CLOCK-BMAL1 heterodimer-mediated transcriptional activation of the core clock component PER2. The protein is Lysine-specific demethylase 5B (KDM5B) of Homo sapiens (Human).